A 551-amino-acid polypeptide reads, in one-letter code: Arginine--tRNA ligase (551 aa).

The 'HIGH' region motif lies at 124–134; sequence ANPTGPLHIGH.

Belongs to the class-I aminoacyl-tRNA synthetase family. As to quaternary structure, monomer.

It localises to the cytoplasm. It catalyses the reaction tRNA(Arg) + L-arginine + ATP = L-arginyl-tRNA(Arg) + AMP + diphosphate. This is Arginine--tRNA ligase from Solidesulfovibrio magneticus (strain ATCC 700980 / DSM 13731 / RS-1) (Desulfovibrio magneticus).